The primary structure comprises 442 residues: Elongation factor 1-gamma (442 aa).

A GST N-terminal domain is found at 2–87; it reads AAGTLYTYPE…FLSNDALRGS (86 aa). The 129-residue stretch at 88 to 216 folds into the GST C-terminal domain; that stretch reads TPQASAQVLQ…VKLCEKMAQF (129 aa). 2 stretches are compositionally biased toward basic and acidic residues: residues 224 to 242 and 249 to 263; these read MQPKKEAPAKKEKAGKEGG and QEKKEKKKEEKKAAP. The disordered stretch occupies residues 224–273; it reads MQPKKEAPAKKEKAGKEGGKQQQPQQEKKEKKKEEKKAAPAEEEMDECEA. The 162-residue stretch at 281–442 folds into the EF-1-gamma C-terminal domain; it reads AKDPYAHLPK…KSFNQGKIFK (162 aa).

EF-1 is composed of four subunits: alpha, beta, delta, and gamma.

Probably plays a role in anchoring the complex to other cellular components. The protein is Elongation factor 1-gamma (eef1g) of Carassius auratus (Goldfish).